Consider the following 488-residue polypeptide: Nitrogen metabolite repression protein nmr (488 aa).

The interval 1 to 45 (MPAEILSELPLRPAPRDIKIPNAMHNEERRHKHSRSSYSEMSPLM) is disordered. Basic and acidic residues predominate over residues 14–29 (APRDIKIPNAMHNEER). The segment covering 36-45 (SSYSEMSPLM) has biased composition (polar residues). Residues 71-76 (NAAGRQ), asparagine 165, lysine 215, and 237-240 (YNNN) each bind NADP(+). Residues 75-76 (RQ), 165-167 (NTT), lysine 215, and 237-240 (YNNN) each bind NAD(+). Residues 412 to 488 (EEYDGGGGNN…NKRADEEWLA (77 aa)) form a dispensable for NMR function region. The interval 422–488 (IGNNHNNHHQ…NKRADEEWLA (67 aa)) is disordered. Over residues 438–459 (HQNGHQNGHNGINGHIVNGGVD) the composition is skewed to low complexity. The span at 460–473 (SESEEEDSDSDDEG) shows a compositional bias: acidic residues.

It belongs to the NmrA-type oxidoreductase family. In terms of assembly, interacts with nit-2.

It is found in the nucleus. May be a redox sensor protein. Negative transcriptional regulator involved in the post-transcriptional modulation of the GATA-type transcription factor nit-2, forming part of a system controlling nitrogen metabolite repression. In Neurospora crassa (strain ATCC 24698 / 74-OR23-1A / CBS 708.71 / DSM 1257 / FGSC 987), this protein is Nitrogen metabolite repression protein nmr (nmr).